The following is an 891-amino-acid chain: Extended synaptotagmin-3 (891 aa).

Positions Met1–Arg30 are disordered. Residues Met1–Ser32 are Cytoplasmic-facing. The segment covering Val17–Gly28 has biased composition (basic and acidic residues). The helical transmembrane segment at Gly33–Val53 threads the bilayer. Position 54 (Tyr54) is a topological domain, lumenal. The helical transmembrane segment at Leu55–Trp75 threads the bilayer. Residues Trp76–Ser891 are Cytoplasmic-facing. The SMP-LTD domain maps to Asp118 to Lys295. C2 domains lie at Val292 to Phe412 and Ser430 to His570. The Ca(2+) site is built by Lys325, Asp326, Asp336, Asp383, Glu384, Asp385, Asp387, Asp389, and Asp390. The disordered stretch occupies residues Ser652–Pro711. Residues Glu659–Glu670 show a composition bias toward pro residues. Residues Arg759–Tyr881 form the C2 3 domain. The segment at Arg806–Lys813 is required for phosphatidylinositol 4,5-bisphosphate-dependent location at the cell membrane.

This sequence belongs to the extended synaptotagmin family.

Its subcellular location is the cell membrane. The protein localises to the endoplasmic reticulum membrane. In terms of biological role, tethers the endoplasmic reticulum to the cell membrane and promotes the formation of appositions between the endoplasmic reticulum and the cell membrane. Binds glycerophospholipids in a barrel-like domain and may play a role in cellular lipid transport. This is Extended synaptotagmin-3 (Esyt3) from Mus musculus (Mouse).